The primary structure comprises 268 residues: MNQMKIAVAGASGRMGHMLIEAILNAADATLSGALDIATSPAIGTDAAAFLGKPSGVLIESDLAKGLANADFLIDFTRPEGTLKHLEYCAAHGIKMIIGTTGFDVAGKAAIAAAAEKTAIMFAPNMSVGVNVTMKLLEMAAQNFSEGYDIEIIEAHHRNKVDAPSGTAIKMGEVIAGALGKELNDVAVWAREGVTGARDPSSIGFATVRGGDIIGDHTVLFAGDGERIEISHKSSSRVSYAHGSLRAARFLADKKTGLYDMQDVLGLR.

NAD(+) contacts are provided by residues 10-15 (GASGRM), Asp36, 99-101 (GTT), and 123-126 (APNM). His156 acts as the Proton donor/acceptor in catalysis. His157 contributes to the (S)-2,3,4,5-tetrahydrodipicolinate binding site. The active-site Proton donor is Lys160. Residue 166 to 167 (GT) participates in (S)-2,3,4,5-tetrahydrodipicolinate binding.

It belongs to the DapB family.

Its subcellular location is the cytoplasm. It carries out the reaction (S)-2,3,4,5-tetrahydrodipicolinate + NAD(+) + H2O = (2S,4S)-4-hydroxy-2,3,4,5-tetrahydrodipicolinate + NADH + H(+). The enzyme catalyses (S)-2,3,4,5-tetrahydrodipicolinate + NADP(+) + H2O = (2S,4S)-4-hydroxy-2,3,4,5-tetrahydrodipicolinate + NADPH + H(+). Its pathway is amino-acid biosynthesis; L-lysine biosynthesis via DAP pathway; (S)-tetrahydrodipicolinate from L-aspartate: step 4/4. In terms of biological role, catalyzes the conversion of 4-hydroxy-tetrahydrodipicolinate (HTPA) to tetrahydrodipicolinate. The sequence is that of 4-hydroxy-tetrahydrodipicolinate reductase from Herminiimonas arsenicoxydans.